The chain runs to 125 residues: Small ribosomal subunit protein uS13 (125 aa).

The protein belongs to the universal ribosomal protein uS13 family. In terms of assembly, part of the 30S ribosomal subunit. Forms a loose heterodimer with protein S19. Forms two bridges to the 50S subunit in the 70S ribosome.

Its function is as follows. Located at the top of the head of the 30S subunit, it contacts several helices of the 16S rRNA. In the 70S ribosome it contacts the 23S rRNA (bridge B1a) and protein L5 of the 50S subunit (bridge B1b), connecting the 2 subunits; these bridges are implicated in subunit movement. Contacts the tRNAs in the A and P-sites. This chain is Small ribosomal subunit protein uS13, found in Rickettsia bellii (strain OSU 85-389).